A 356-amino-acid polypeptide reads, in one-letter code: 4-hydroxybenzoate polyprenyltransferase, mitochondrial (356 aa).

Residues 1-44 (MITRSIGIARRSNSINCIVGSNTSTSYSLDESTKRWISTSTKQP) constitute a mitochondrion transit peptide. 6 helical membrane-spanning segments follow: residues 71–91 (VDKP…IAMA), 93–113 (PAGQ…AFLM), 150–170 (AIGL…QLNW), 195–215 (WPQF…WCAL), 269–289 (WLSA…IASD), and 332–352 (IILF…QILI).

It belongs to the UbiA prenyltransferase family. It depends on Mg(2+) as a cofactor.

The protein resides in the mitochondrion inner membrane. The enzyme catalyses an all-trans-polyprenyl diphosphate + 4-hydroxybenzoate = a 4-hydroxy-3-(all-trans-polyprenyl)benzoate + diphosphate. Its pathway is cofactor biosynthesis; ubiquinone biosynthesis. In terms of biological role, catalyzes the prenylation of para-hydroxybenzoate (PHB) with an all-trans polyprenyl group. Mediates the second step in the final reaction sequence of coenzyme Q (CoQ) biosynthesis, which is the condensation of the polyisoprenoid side chain with PHB, generating the first membrane-bound Q intermediate. This chain is 4-hydroxybenzoate polyprenyltransferase, mitochondrial (coq-2), found in Caenorhabditis elegans.